Here is a 441-residue protein sequence, read N- to C-terminus: Xaa-Pro dipeptidase (441 aa).

Mn(2+) is bound by residues aspartate 244, aspartate 255, histidine 336, glutamate 381, and glutamate 420.

Belongs to the peptidase M24B family. Bacterial-type prolidase subfamily. Requires Mn(2+) as cofactor.

It carries out the reaction Xaa-L-Pro dipeptide + H2O = an L-alpha-amino acid + L-proline. Functionally, splits dipeptides with a prolyl residue in the C-terminal position. This is Xaa-Pro dipeptidase from Xanthomonas axonopodis pv. citri (strain 306).